Reading from the N-terminus, the 225-residue chain is Dynein axonemal assembly factor 19 (225 aa).

Residues 8 to 32 (DFRELERELANALAADQKYSRENDA) adopt a coiled-coil conformation.

Belongs to the DNAAF19/PR46b family. As to quaternary structure, homodimer.

The protein resides in the cytoplasm. It localises to the cell projection. It is found in the cilium. The protein localises to the flagellum. Dynein-attachment factor required for cilia motility. This Xenopus tropicalis (Western clawed frog) protein is Dynein axonemal assembly factor 19 (dnaaf19).